The sequence spans 372 residues: Probable NADH-dependent flavin oxidoreductase YqiG (372 aa).

Belongs to the NADH:flavin oxidoreductase/NADH oxidase family.

The protein is Probable NADH-dependent flavin oxidoreductase YqiG (yqiG) of Bacillus subtilis (strain 168).